The following is a 267-amino-acid chain: B3 domain-containing protein Os02g0455800 (267 aa).

A DNA-binding region (TF-B3) is located at residues 30–131; that stretch reads EKFLMPSDLC…RLFICCRLGT (102 aa). Residues 172-221 are disordered; it reads QARLHDGNQDGGGAPSRHVPSSGRRVEAQLSRVSSRRQRRTMKHSIPEPT. A compositionally biased stretch (basic residues) spans 205-214; sequence SSRRQRRTMK.

Its subcellular location is the nucleus. This chain is B3 domain-containing protein Os02g0455800, found in Oryza sativa subsp. japonica (Rice).